The primary structure comprises 422 residues: Serine--tRNA ligase (422 aa).

An L-serine-binding site is contributed by 230 to 232 (TAE). 261 to 263 (RAE) contacts ATP. Residue glutamate 284 coordinates L-serine. 348-351 (EISS) lines the ATP pocket. An L-serine-binding site is contributed by serine 383.

The protein belongs to the class-II aminoacyl-tRNA synthetase family. Type-1 seryl-tRNA synthetase subfamily. As to quaternary structure, homodimer. The tRNA molecule binds across the dimer.

The protein localises to the cytoplasm. The catalysed reaction is tRNA(Ser) + L-serine + ATP = L-seryl-tRNA(Ser) + AMP + diphosphate + H(+). It catalyses the reaction tRNA(Sec) + L-serine + ATP = L-seryl-tRNA(Sec) + AMP + diphosphate + H(+). The protein operates within aminoacyl-tRNA biosynthesis; selenocysteinyl-tRNA(Sec) biosynthesis; L-seryl-tRNA(Sec) from L-serine and tRNA(Sec): step 1/1. Its function is as follows. Catalyzes the attachment of serine to tRNA(Ser). Is also able to aminoacylate tRNA(Sec) with serine, to form the misacylated tRNA L-seryl-tRNA(Sec), which will be further converted into selenocysteinyl-tRNA(Sec). In Pelotomaculum thermopropionicum (strain DSM 13744 / JCM 10971 / SI), this protein is Serine--tRNA ligase.